Here is a 994-residue protein sequence, read N- to C-terminus: Phosphoenolpyruvate carboxylase (994 aa).

Positions 1-67 (MKAVRSDKTT…GRTREDKDHP (67 aa)) are disordered. Composition is skewed to low complexity over residues 9–24 (TTQAATTAQAQKPAKA) and 34–57 (AAPQAANASARQPASAQAPAPKAN). Active-site residues include histidine 204 and lysine 646.

The protein belongs to the PEPCase type 1 family. Mg(2+) is required as a cofactor.

The catalysed reaction is oxaloacetate + phosphate = phosphoenolpyruvate + hydrogencarbonate. Its function is as follows. Forms oxaloacetate, a four-carbon dicarboxylic acid source for the tricarboxylic acid cycle. This is Phosphoenolpyruvate carboxylase from Paraburkholderia xenovorans (strain LB400).